We begin with the raw amino-acid sequence, 651 residues long: MSGELNGNDTPTQAAMPAVGVPESVAFAEDAEQHNESMKTLVLGALGVVYGDIGTSPIYAFREALHAAASDGILARSDILGVVSLIFWALTLVVTIKYVLFVLRADNNGEGGILSLMALVRGALKGRPDLILGVGICGAALFFGDAVITPAISVLSAMEGLEIVAPDLTPFVVPITVVILVTLFSVQKLGTGKVAIVFGPIMALWFLALGASGLWHIFDDPTVMVALNPYYAVRFLMISPGIAFITVGAVFLAMTGAEALYADLGHFGRKPIVRAWLWIVFPCLLLNYFGQAAFILSHGEAAALPFFQMMPSFALLPMVLLATAATVIASQAVITGAYSVARQAVQLNILPRLEIQHTSEKLHGQIYIPRVNLLLGLAVVILVLGFEKSSNLAAAYGIAVTGNMLVTTVLLYIVMTRIWNWRVSRALPIIVGFLIIDIMFFGANIIKVHEGGWASIGIAAILVLIMWTWVRGTRHLFNKTRKAEVPLDLIVQQMTKRPPTIVPGTAVFLTGDPKSAPTALMHSLKHYKVLHENNVILTVVTASKPWVSSADRARVSQYNERFMQVTLTFGYMQQPNIPRALGICRKLGWKFDIMTTSFFLSRRSLKASAHSGLPLWQDKLFILLARTASDATEYFQIPTGRVVEIGTQVNL.

The next 12 membrane-spanning stretches (helical) occupy residues 41-61 (LVLG…IYAF), 82-102 (VVSL…VLFV), 130-150 (LILG…VITP), 163-183 (IVAP…LVTL), 194-214 (VAIV…ASGL), 235-255 (FLMI…LAMT), 276-296 (WLWI…AFIL), 309-329 (MMPS…TVIA), 366-386 (IYIP…VLGF), 395-415 (AYGI…YIVM), 426-446 (ALPI…ANII), and 450-470 (EGGW…WTWV).

Belongs to the HAK/KUP transporter (TC 2.A.72) family.

The protein localises to the cell inner membrane. The catalysed reaction is K(+)(in) + H(+)(in) = K(+)(out) + H(+)(out). Its function is as follows. Transport of potassium into the cell. Likely operates as a K(+):H(+) symporter. This is Probable potassium transport system protein Kup from Brucella anthropi (strain ATCC 49188 / DSM 6882 / CCUG 24695 / JCM 21032 / LMG 3331 / NBRC 15819 / NCTC 12168 / Alc 37) (Ochrobactrum anthropi).